Reading from the N-terminus, the 391-residue chain is 23S rRNA (uracil(747)-C(5))-methyltransferase RlmC (391 aa).

Positions 5, 13, 16, and 95 each coordinate [4Fe-4S] cluster. Positions 220, 249, 276, and 322 each coordinate S-adenosyl-L-methionine. Cysteine 349 acts as the Nucleophile in catalysis.

Belongs to the class I-like SAM-binding methyltransferase superfamily. RNA M5U methyltransferase family. RlmC subfamily.

The enzyme catalyses uridine(747) in 23S rRNA + S-adenosyl-L-methionine = 5-methyluridine(747) in 23S rRNA + S-adenosyl-L-homocysteine + H(+). Functionally, catalyzes the formation of 5-methyl-uridine at position 747 (m5U747) in 23S rRNA. The protein is 23S rRNA (uracil(747)-C(5))-methyltransferase RlmC of Actinobacillus pleuropneumoniae serotype 5b (strain L20).